The following is a 130-amino-acid chain: Small ribosomal subunit protein uS8 (130 aa).

Belongs to the universal ribosomal protein uS8 family. Part of the 30S ribosomal subunit. Contacts proteins S5 and S12.

Functionally, one of the primary rRNA binding proteins, it binds directly to 16S rRNA central domain where it helps coordinate assembly of the platform of the 30S subunit. In Shewanella sp. (strain MR-7), this protein is Small ribosomal subunit protein uS8.